Here is a 338-residue protein sequence, read N- to C-terminus: Protein RecA (338 aa).

68 to 75 (GPESSGKT) contributes to the ATP binding site.

The protein belongs to the RecA family.

The protein localises to the cytoplasm. In terms of biological role, can catalyze the hydrolysis of ATP in the presence of single-stranded DNA, the ATP-dependent uptake of single-stranded DNA by duplex DNA, and the ATP-dependent hybridization of homologous single-stranded DNAs. It interacts with LexA causing its activation and leading to its autocatalytic cleavage. The protein is Protein RecA of Citrifermentans bemidjiense (strain ATCC BAA-1014 / DSM 16622 / JCM 12645 / Bem) (Geobacter bemidjiensis).